We begin with the raw amino-acid sequence, 117 residues long: Large ribosomal subunit protein eL22 (117 aa).

2 positions are modified to phosphoserine: S49 and S50.

Belongs to the eukaryotic ribosomal protein eL22 family. As to quaternary structure, component of the large ribosomal subunit (LSU). Mature yeast ribosomes consist of a small (40S) and a large (60S) subunit. The 40S small subunit contains 1 molecule of ribosomal RNA (18S rRNA) and at least 33 different proteins. The large 60S subunit contains 3 rRNA molecules (25S, 5.8S and 5S rRNA) and at least 46 different proteins.

It localises to the cytoplasm. The protein resides in the nucleus. Its subcellular location is the nucleolus. Functionally, component of the ribosome, a large ribonucleoprotein complex responsible for the synthesis of proteins in the cell. The small ribosomal subunit (SSU) binds messenger RNAs (mRNAs) and translates the encoded message by selecting cognate aminoacyl-transfer RNA (tRNA) molecules. The large subunit (LSU) contains the ribosomal catalytic site termed the peptidyl transferase center (PTC), which catalyzes the formation of peptide bonds, thereby polymerizing the amino acids delivered by tRNAs into a polypeptide chain. The nascent polypeptides leave the ribosome through a tunnel in the LSU and interact with protein factors that function in enzymatic processing, targeting, and the membrane insertion of nascent chains at the exit of the ribosomal tunnel. This chain is Large ribosomal subunit protein eL22 (rpl22), found in Schizosaccharomyces pombe (strain 972 / ATCC 24843) (Fission yeast).